The following is a 98-amino-acid chain: C-X-C motif chemokine 10 (98 aa).

Positions 1–21 (MNQTAILICCLVFLTLSGIQG) are cleaved as a signal peptide. Arg26 carries the citrulline modification. 2 cysteine pairs are disulfide-bonded: Cys30/Cys57 and Cys32/Cys74.

It belongs to the intercrine alpha (chemokine CxC) family.

The protein localises to the secreted. Chemotactic for monocytes and T-lymphocytes. Binds to CXCR3. The polypeptide is C-X-C motif chemokine 10 (CXCL10) (Macaca nemestrina (Pig-tailed macaque)).